The following is a 125-amino-acid chain: Holo-[acyl-carrier-protein] synthase (125 aa).

The Mg(2+) site is built by D8 and E57.

It belongs to the P-Pant transferase superfamily. AcpS family. Requires Mg(2+) as cofactor.

It is found in the cytoplasm. The catalysed reaction is apo-[ACP] + CoA = holo-[ACP] + adenosine 3',5'-bisphosphate + H(+). Functionally, transfers the 4'-phosphopantetheine moiety from coenzyme A to a Ser of acyl-carrier-protein. This is Holo-[acyl-carrier-protein] synthase from Halothermothrix orenii (strain H 168 / OCM 544 / DSM 9562).